The primary structure comprises 527 residues: Probable glucomannan 4-beta-mannosyltransferase 9 (527 aa).

Residues 37–59 traverse the membrane as a helical segment; that stretch reads AMSVMLFVEKVYMSVVLVGVHLF. The active site involves aspartate 131. 2 residues coordinate substrate: aspartate 190 and aspartate 192. The active site involves aspartate 284. Transmembrane regions (helical) follow at residues 363-383, 399-419, 478-498, and 505-525; these read IIGH…TVLI, IVTI…IFWV, ALEL…IAYG, and FLFL…GTIV.

This sequence belongs to the glycosyltransferase 2 family. Plant cellulose synthase-like A subfamily.

It localises to the golgi apparatus membrane. The enzyme catalyses GDP-mannose + (glucomannan)n = GDP + (glucomannan)n+1.. Functionally, probable mannan synthase which consists of a 4-beta-mannosyltransferase activity on mannan using GDP-mannose. The beta-1,4-mannan product is the backbone for galactomannan synthesis by galactomannan galactosyltransferase. Galactomannan is a noncellulosic polysaccharides of plant cell wall. This is Probable glucomannan 4-beta-mannosyltransferase 9 from Oryza sativa subsp. japonica (Rice).